Consider the following 459-residue polypeptide: Putrescine aminotransferase (459 aa).

Pyridoxal 5'-phosphate is bound by residues 150–151 (GT) and Gln-274. The residue at position 300 (Lys-300) is an N6-(pyridoxal phosphate)lysine. Thr-332 is a binding site for pyridoxal 5'-phosphate.

Belongs to the class-III pyridoxal-phosphate-dependent aminotransferase family. Putrescine aminotransferase subfamily. Pyridoxal 5'-phosphate serves as cofactor.

The enzyme catalyses an alkane-alpha,omega-diamine + 2-oxoglutarate = an omega-aminoaldehyde + L-glutamate. The catalysed reaction is putrescine + 2-oxoglutarate = 1-pyrroline + L-glutamate + H2O. It carries out the reaction cadaverine + 2-oxoglutarate = 5-aminopentanal + L-glutamate. Its pathway is amine and polyamine degradation; putrescine degradation; 4-aminobutanal from putrescine (transaminase route): step 1/1. Catalyzes the aminotransferase reaction from putrescine to 2-oxoglutarate, leading to glutamate and 4-aminobutanal, which spontaneously cyclizes to form 1-pyrroline. This is the first step in one of two pathways for putrescine degradation, where putrescine is converted into 4-aminobutanoate (gamma-aminobutyrate or GABA) via 4-aminobutanal. Also functions as a cadaverine transaminase in a a L-lysine degradation pathway to succinate that proceeds via cadaverine, glutarate and L-2-hydroxyglutarate. The polypeptide is Putrescine aminotransferase (Shigella flexneri serotype 5b (strain 8401)).